Consider the following 407-residue polypeptide: Indoleamine 2,3-dioxygenase 1 (407 aa).

Histidine 350 is a binding site for heme b. Residues 362–407 form a disordered region; that stretch reads SKKKPTDGDKSEEPSNVESRGTGGTNPMTFLRSVKDTTEKALLSWP. Residues 365–374 show a composition bias toward basic and acidic residues; that stretch reads KPTDGDKSEE.

This sequence belongs to the indoleamine 2,3-dioxygenase family. In terms of assembly, monomer. Heme b serves as cofactor. In terms of tissue distribution, highly expressed in epididymis, duodemum, jejunum, ileum, colon and spleen. Highly expressed in epididymis, prostate, duodemum, jejunum, ileum, colon and spleen, not detected in the liver (at protein level). Expressed in tumors only upon exposure to IFN gamma. Constitutively expressed in placenta in trophoblast cells. Expression is restricted to perinuclear regions of primary trophoblast giant cells (TGCs) of fetal origin at mid-gestation (10.5 dpc). After placentation (14 dpc), no IDO expression was detected at the maternal-fetal interface.

It is found in the cytoplasm. The protein localises to the cytosol. The enzyme catalyses D-tryptophan + O2 = N-formyl-D-kynurenine. The catalysed reaction is L-tryptophan + O2 = N-formyl-L-kynurenine. With respect to regulation, activity is inhibited by and MTH-trp (methylthiohydantoin-DL-tryptophan), modestly inhibited by L-1MT (1-methyl-L-tryptophan) but not D-1MT (1-methyl-D-tryptophan). In terms of biological role, catalyzes the first and rate limiting step of the catabolism of the essential amino acid tryptophan along the kynurenine pathway. Involved in the peripheral immune tolerance, contributing to maintain homeostasis by preventing autoimmunity or immunopathology that would result from uncontrolled and overreacting immune responses. Tryptophan shortage inhibits T lymphocytes division and accumulation of tryptophan catabolites induces T-cell apoptosis and differentiation of regulatory T-cells. Acts as a suppressor of anti-tumor immunity. Limits the growth of intracellular pathogens by depriving tryptophan. Protects the fetus from maternal immune rejection. The protein is Indoleamine 2,3-dioxygenase 1 of Mus musculus (Mouse).